The sequence spans 1104 residues: Lon protease homolog, mitochondrial (1104 aa).

The transit peptide at 1–54 directs the protein to the mitochondrion; it reads MLRGQTLRWRAALQTPRSLILRPLFAPGGYNVGPRSVLETSRRFRSLPPSLRTF. Disordered stretches follow at residues 41–192 and 296–317; these read SRRF…KPSV and SLIPPGDSTKSGNSEDKTTEKR. 2 stretches are compositionally biased toward basic and acidic residues: residues 64–104 and 125–144; these read KPPP…DSSG and KAADRDQRSVTEDAKREAEA. Residues 158 to 169 show a composition bias toward low complexity; sequence SDSSSESKPSGS. 2 stretches are compositionally biased toward basic and acidic residues: residues 172-187 and 308-317; these read GGDDGGKKGKKNDKAL and NSEDKTTEKR. The Lon N-terminal domain maps to 199–451; it reads VMAIPIAKRP…KGLVVLKKEL (253 aa). Residue 604-611 coordinates ATP; the sequence is GPPGVGKT. Residues 825 to 839 are compositionally biased toward basic and acidic residues; the sequence is AEGKAAQEESEKETG. Residues 825-857 form a disordered region; it reads AEGKAAQEESEKETGPIESTSEQEKATTENPRV. The Lon proteolytic domain occupies 891-1077; sequence TFPPGVTMGL…SEVFDILFAD (187 aa). Catalysis depends on residues S983 and K1026.

The protein belongs to the peptidase S16 family. As to quaternary structure, homohexamer or homoheptamer. Organized in a ring with a central cavity.

The protein resides in the mitochondrion matrix. The enzyme catalyses Hydrolysis of proteins in presence of ATP.. Its function is as follows. ATP-dependent serine protease that mediates the selective degradation of misfolded, unassembled or oxidatively damaged polypeptides as well as certain short-lived regulatory proteins in the mitochondrial matrix. May also have a chaperone function in the assembly of inner membrane protein complexes. Participates in the regulation of mitochondrial gene expression and in the maintenance of the integrity of the mitochondrial genome. Binds to mitochondrial DNA in a site-specific manner. This is Lon protease homolog, mitochondrial (pim1) from Emericella nidulans (strain FGSC A4 / ATCC 38163 / CBS 112.46 / NRRL 194 / M139) (Aspergillus nidulans).